A 393-amino-acid polypeptide reads, in one-letter code: CCCH-type zinc finger protein oma-2 (393 aa).

Positions 1–26 are disordered; that stretch reads MDMLKENVIQNNEARTESSVEPSHPD. The segment covering 14–26 has biased composition (basic and acidic residues); the sequence is ARTESSVEPSHPD. 2 C3H1-type zinc fingers span residues 105–133 and 147–175; these read SYKT…HGEE and KYRT…HPDN. 2 disordered regions span residues 227-251 and 311-340; these read TPDE…RYEL and KQST…LTAA. The span at 313 to 340 shows a compositional bias: low complexity; sequence STPGGVSGYSSSGSTPSQDSDSSPLTAA. T327 is modified (phosphothreonine; by GSK3).

In terms of tissue distribution, exclusively expressed in the hermaphrodite gonad. Expression only in cellulized oocytes. Widely distributed throughout gonadal oocytes from the mitotic stage to the developing diakinesis stage.

The protein resides in the cytoplasm. The protein localises to the cytoplasmic granule. It localises to the cytoskeleton. Its subcellular location is the microtubule organizing center. It is found in the centrosome. Functionally, zinc-finger RNA-binding protein that binds to 5'-UA[AU]-3' motifs in the 3'-UTR of maternal mRNAs to suppress translation in oocytes and embryos. Acts redundantly with oma-1 to control the temporal expression and distribution of maternal proteins and thereby promote meiotic progression, oocyte maturation, fertilization and embryonic development. Also, together with oma-1, is involved in P-granule distribution during embryonic development. This is CCCH-type zinc finger protein oma-2 from Caenorhabditis elegans.